The chain runs to 514 residues: Steroid 17-alpha-hydroxylase/17,20 lyase (514 aa).

Position 445 (Cys-445) interacts with heme.

It belongs to the cytochrome P450 family. Heme serves as cofactor.

It is found in the membrane. It catalyses the reaction a C21-steroid + reduced [NADPH--hemoprotein reductase] + O2 = a 17alpha-hydroxy-C21-steroid + oxidized [NADPH--hemoprotein reductase] + H2O + H(+). The enzyme catalyses 17alpha-hydroxyprogesterone + reduced [NADPH--hemoprotein reductase] + O2 = androst-4-ene-3,17-dione + acetate + oxidized [NADPH--hemoprotein reductase] + H2O + 2 H(+). The catalysed reaction is 17alpha-hydroxypregnenolone + reduced [NADPH--hemoprotein reductase] + O2 = 3beta-hydroxyandrost-5-en-17-one + acetate + oxidized [NADPH--hemoprotein reductase] + H2O + 2 H(+). It participates in lipid metabolism; steroid biosynthesis. Conversion of pregnenolone and progesterone to their 17-alpha-hydroxylated products and subsequently to dehydroepiandrosterone (DHEA) and androstenedione. Catalyzes both the 17-alpha-hydroxylation and the 17,20-lyase reaction. In Ictalurus punctatus (Channel catfish), this protein is Steroid 17-alpha-hydroxylase/17,20 lyase (cyp17a1).